Here is a 348-residue protein sequence, read N- to C-terminus: Zinc transporter ZIP13 (348 aa).

Over 1–45 (MMIQTAVAQAKTAPAGPGPWSIKDLVDLQYLDELMSIDNLDVWFC) the chain is Cytoplasmic. Residues 46 to 66 (SLVGSIAIGLSGIFPLLVIPI) form a helical membrane-spanning segment. Residues 67-83 (EAGTALKTEAGCQKLKK) are Lumenal-facing. Residues 84–104 (LLSFAIGGLLGDVFLHLLPEA) traverse the membrane as a helical segment. The Cytoplasmic portion of the chain corresponds to 105–118 (WAYTSSPGGSHRHY). The chain crosses the membrane as a helical span at residues 119–139 (CTQGLWVIGGLMSFLTLEKMF). The Lumenal portion of the chain corresponds to 140–219 (PDEVGDPETK…CIDNFTHGLA (80 aa)). A disordered region spans residues 144–192 (GDPETKTSFQRTTSSSSDLSSQFSVSPQTNGICSNNNSDSKPKTDISPY). The span at 149–169 (KTSFQRTTSSSSDLSSQFSVS) shows a compositional bias: low complexity. Over residues 170 to 182 (PQTNGICSNNNSD) the composition is skewed to polar residues. The chain crosses the membrane as a helical span at residues 220-240 (VAGSFLVSRKVGFLTTFAILL). The XEXPHE-motif motif lies at 241 to 246 (HEIPHE). Topologically, residues 241-262 (HEIPHEVGDFAILLRAGFDRWK) are cytoplasmic. The chain crosses the membrane as a helical span at residues 263–283 (AARMQLSTALGGVLGACFALC). Residues 284–294 (SQSQHGAENAT) are Lumenal-facing. Residues 295–315 (TWILPFTSGGFLYIALVNVVP) form a helical membrane-spanning segment. Over 316–326 (DLLEETNPRNS) the chain is Cytoplasmic. Residues 327 to 347 (LLQVLLLFSGIGVMALLSIAM) traverse the membrane as a helical segment. Position 348 (aspartate 348) is a topological domain, lumenal.

Belongs to the ZIP transporter (TC 2.A.5) family. In terms of assembly, homodimer.

Its subcellular location is the golgi apparatus membrane. It is found in the cytoplasmic vesicle membrane. The protein localises to the endoplasmic reticulum membrane. It catalyses the reaction Zn(2+)(in) = Zn(2+)(out). In terms of biological role, functions as a zinc transporter transporting Zn(2+) from the Golgi apparatus to the cytosol and thus influences the zinc level at least in areas of the cytosol. The sequence is that of Zinc transporter ZIP13 from Danio rerio (Zebrafish).